The chain runs to 281 residues: Protease HtpX homolog (281 aa).

The next 2 helical transmembrane spans lie at 6–26 and 28–48; these read VWLL…AIGG and SGAL…YYYS. Residue H130 participates in Zn(2+) binding. The active site involves E131. Position 134 (H134) interacts with Zn(2+). A run of 2 helical transmembrane segments spans residues 140-160 and 181-201; these read VLIG…SNIV and IASL…QLAI. E206 contributes to the Zn(2+) binding site.

This sequence belongs to the peptidase M48B family. Zn(2+) is required as a cofactor.

It is found in the cell membrane. In Pelotomaculum thermopropionicum (strain DSM 13744 / JCM 10971 / SI), this protein is Protease HtpX homolog.